Here is a 391-residue protein sequence, read N- to C-terminus: MDDKKNEDVEMRNFNGRSSPSQRDPFISKPGAAKRGGSSFDLSNVTNSPGISILAYCLASISMTVTNKYCVSGSNWNLNFFYLAIQSVVCIIAIIICKQAGLITNLAPFDTKKAKTWFPISLLLVGMIYTSTKALQFLSVPVYTIFKNLTIIVIAYGEVLWFGGSVTPSALFSFGLMVLSSVVAAWADIQHALYGGGATQTKEAADALSTLNAGYAWMGMNVFCTAAYVLSMRKVIKKMNFKDWDTMFYNNLLTIPVLFVCSFVFENWSSENLTKNFPLETRNNLILGMIYSGLATIFISYCSAWCIRVTSSTTYSMVGALNKLPIAVSGLVFFAAPVTFGSVSAIFIGFVSGIVYAWAKVRQNQSKGSVLPTTQPVMSASSQSNRDAAKA.

Over residues 1 to 11 (MDDKKNEDVEM) the composition is skewed to basic and acidic residues. The disordered stretch occupies residues 1 to 28 (MDDKKNEDVEMRNFNGRSSPSQRDPFIS). Residues 1–44 (MDDKKNEDVEMRNFNGRSSPSQRDPFISKPGAAKRGGSSFDLSN) lie on the Cytoplasmic side of the membrane. A helical membrane pass occupies residues 45 to 65 (VTNSPGISILAYCLASISMTV). Topologically, residues 66–75 (TNKYCVSGSN) are lumenal. The chain crosses the membrane as a helical span at residues 76–96 (WNLNFFYLAIQSVVCIIAIII). Topologically, residues 97–115 (CKQAGLITNLAPFDTKKAK) are cytoplasmic. The chain crosses the membrane as a helical span at residues 116–138 (TWFPISLLLVGMIYTSTKALQFL). Over 139 to 141 (SVP) the chain is Lumenal. The helical transmembrane segment at 142–164 (VYTIFKNLTIIVIAYGEVLWFGG) threads the bilayer. The Cytoplasmic portion of the chain corresponds to 165–170 (SVTPSA). A helical transmembrane segment spans residues 171–193 (LFSFGLMVLSSVVAAWADIQHAL). The Lumenal segment spans residues 194–209 (YGGGATQTKEAADALS). The chain crosses the membrane as a helical span at residues 210 to 230 (TLNAGYAWMGMNVFCTAAYVL). Residues 231 to 245 (SMRKVIKKMNFKDWD) lie on the Cytoplasmic side of the membrane. The helical transmembrane segment at 246 to 266 (TMFYNNLLTIPVLFVCSFVFE) threads the bilayer. N-linked (GlcNAc...) asparagine glycans are attached at residues N267 and N272. The Lumenal segment spans residues 267-284 (NWSSENLTKNFPLETRNN). The helical transmembrane segment at 285–305 (LILGMIYSGLATIFISYCSAW) threads the bilayer. The Cytoplasmic segment spans residues 306–313 (CIRVTSST). The chain crosses the membrane as a helical span at residues 314-336 (TYSMVGALNKLPIAVSGLVFFAA). The Lumenal portion of the chain corresponds to 337–339 (PVT). Residues 340 to 359 (FGSVSAIFIGFVSGIVYAWA) form a helical membrane-spanning segment. Residues 360–391 (KVRQNQSKGSVLPTTQPVMSASSQSNRDAAKA) lie on the Cytoplasmic side of the membrane. The segment at 369–391 (SVLPTTQPVMSASSQSNRDAAKA) is disordered.

It belongs to the TPT transporter family. SLC35D subfamily. In terms of assembly, homooligomer.

The protein resides in the golgi apparatus membrane. Its subcellular location is the cytoplasmic vesicle membrane. The protein localises to the endoplasmic reticulum membrane. Its function is as follows. Involved in the import of GDP-mannose from the cytoplasm into the Golgi lumen. This Sclerotinia sclerotiorum (strain ATCC 18683 / 1980 / Ss-1) (White mold) protein is GDP-mannose transporter (vrg4).